An 891-amino-acid chain; its full sequence is DNA polymerase I (891 aa).

The 5'-3' exonuclease domain occupies 1-313; it reads MEQPVIKEGT…LLDNTPALDN (313 aa). A 3'-5' exonuclease domain is found at 314-488; that stretch reads TPKKSCMIVL…RLCEYFEKGG (175 aa). The polymerase stretch occupies residues 492–890; that stretch reads NLLSLAREIE…FIAKRWNELK (399 aa).

This sequence belongs to the DNA polymerase type-A family. As to quaternary structure, single-chain monomer with multiple functions.

It carries out the reaction DNA(n) + a 2'-deoxyribonucleoside 5'-triphosphate = DNA(n+1) + diphosphate. Its function is as follows. In addition to polymerase activity, this DNA polymerase exhibits 3'-5' and 5'-3' exonuclease activity. The protein is DNA polymerase I (polA) of Helicobacter pylori (strain ATCC 700392 / 26695) (Campylobacter pylori).